A 325-amino-acid polypeptide reads, in one-letter code: Phospho-N-acetylmuramoyl-pentapeptide-transferase (325 aa).

10 helical membrane passes run Leu-3–Ile-23, Gly-48–Val-68, Ala-79–Ile-99, Leu-106–Ala-126, Ile-136–Ile-156, Gly-174–Thr-194, Leu-199–Tyr-219, Val-223–Met-243, Leu-246–Leu-266, and Ile-298–Ile-318.

Belongs to the glycosyltransferase 4 family. MraY subfamily. It depends on Mg(2+) as a cofactor.

Its subcellular location is the cell membrane. The enzyme catalyses UDP-N-acetyl-alpha-D-muramoyl-L-alanyl-gamma-D-glutamyl-meso-2,6-diaminopimeloyl-D-alanyl-D-alanine + di-trans,octa-cis-undecaprenyl phosphate = di-trans,octa-cis-undecaprenyl diphospho-N-acetyl-alpha-D-muramoyl-L-alanyl-D-glutamyl-meso-2,6-diaminopimeloyl-D-alanyl-D-alanine + UMP. Its pathway is cell wall biogenesis; peptidoglycan biosynthesis. Catalyzes the initial step of the lipid cycle reactions in the biosynthesis of the cell wall peptidoglycan: transfers peptidoglycan precursor phospho-MurNAc-pentapeptide from UDP-MurNAc-pentapeptide onto the lipid carrier undecaprenyl phosphate, yielding undecaprenyl-pyrophosphoryl-MurNAc-pentapeptide, known as lipid I. This is Phospho-N-acetylmuramoyl-pentapeptide-transferase from Clostridium novyi (strain NT).